The chain runs to 298 residues: Aspartate carbamoyltransferase catalytic subunit (298 aa).

The carbamoyl phosphate site is built by Arg-50 and Thr-51. Residue Lys-79 participates in L-aspartate binding. Residues Arg-100, His-128, and Gln-131 each coordinate carbamoyl phosphate. Arg-161 and Arg-220 together coordinate L-aspartate. Carbamoyl phosphate is bound by residues Leu-259 and Pro-260.

The protein belongs to the aspartate/ornithine carbamoyltransferase superfamily. ATCase family. Heterooligomer of catalytic and regulatory chains.

It carries out the reaction carbamoyl phosphate + L-aspartate = N-carbamoyl-L-aspartate + phosphate + H(+). It functions in the pathway pyrimidine metabolism; UMP biosynthesis via de novo pathway; (S)-dihydroorotate from bicarbonate: step 2/3. Its function is as follows. Catalyzes the condensation of carbamoyl phosphate and aspartate to form carbamoyl aspartate and inorganic phosphate, the committed step in the de novo pyrimidine nucleotide biosynthesis pathway. The chain is Aspartate carbamoyltransferase catalytic subunit from Sulfurisphaera tokodaii (strain DSM 16993 / JCM 10545 / NBRC 100140 / 7) (Sulfolobus tokodaii).